Here is a 1647-residue protein sequence, read N- to C-terminus: MFNGGYGSGNSFNLQNYAPIDPMTGIPGFGPSQNAQQQQQQASAPGTSSGGPSQAVSGASSGASMKTEPVARQVSTAQMKRDLEQAAVYVPTPIPEGSTQPQQRQQQQSQPQARQMSTQQAANLRKNAAAAGTPPKQAMQGASREQGNAHQPTAGQIPQSSNQPAQQTHNVPRMPQPLQQVPHPSPVRGSHPAAQQVQNAPQRIPQHVPMPQGVAPHQVIQQVRAPNIGASQMVQQAPSRGHTGAAPASRMAQQPVPLHQGVAPHQAAPQTIQQTPARGRPANAQLAQNAQQRNPQQVPMPQGVAPHHIPPQALGPHGAAPQMTQQAPARGPSGAAQHAQNAHRMTHQQVPLQAPVQGPHRGAPQMAQQPGPHGAAQHPSSGTVAPMHITSLPGNHPLNRTHLLFNRQVVPALDIRNLIAQHRLMVDDFVRAQICYRLPENHQDYWPPGGHPIPMQQQQMRQGAGLPNMAMPPPPLMRHPGPHQNPIHAMQSMQVQPPLSPDQMNMQMFQQRALMMQQQAMQMQMQNPPPVHQQPPPQQPPQQQRQKQQRSQPAPARVPPQVPSQVPVTGGVAADEPPPPCSYSPVAQSSESKIEPVDVKPRVAPVPPQVPVTPTKPVITNNKKKRIDVVTLDEDAPRRVQVKQEIPEVSSTSDATKSDAAPTARGAVRIKQEVESDVAPNTILISAKKFERMKAEAEDKEDMKKKIAALQEALFNIQEERRVEKEIAAFATTNQAVPQNQPASSVQIAQVSTSESDAPGTSEAAATETMTSPKTKNNVIVETEGEQEEDEDEIPIKKSKKRRAKIVSNDEEEEPVRHPKRRSDEKREKRHVSYAESDDDMPVVKKKRRNQSPEDPEYSAASPSEDEDDDIGSFVVSDNEDDDADSFVVGDDEPIEYEEEDEDDMIERRSSRKRRSDSRSKKSATPTDRRRSRDTPTGSRSMRSTSPNDRRKSRETPPGNRSMRRTSPSDGRKSRDTPTASSSMSSSTLSYCKKSKETPMSYEEIEQQKKAKRQRNCKTREENRERKRLAQLEELESSETTGVRRTLRSTQDNSDPLDASLATTIEEFRKTKKKDAKSSENRAKEKQKPMNKRPTSSASVDSNDDGVHIPAKRMAHASSVPGPSRSKPPMIGAVKNRPNHTEMLDKRNKESEEKRRKDRDELERLRNKKHTTEEEKIKMARLQNALKVVGKAAGLKATVKKELTGSPAKKQKPAPAVPKILDFSVGRTFTAIRQTAIKLVFDTFLERDSPNAAREAQEFELSIAKQYTDGQKYRINIGHKVAALRKENTSGILEVNKNAVSHDKILAGGPKDNCTVARGRKTHVDHRQLSIEKLHPLLLQFKLTTSELETNAYPMRRDGSTKAVSIADTVYTQNKKMFLDDYDMSRNCSRCNKEFKLSPNGTMIRSTGICRYHNRGVAINGKRDTFRKRYSCCNEEFNVALGCKFSDVHVTDQLFKKELSTFVSTPVPVPNDQRSTRVYALDCEMVYTIAGPALARLTMVDMQRNRVLDVFVKPPTDVLDPNTEFSGLTMEQINSAPDTLKTCHQKLFKYVNADTILIGHSLESDLKAMRVVHKNVIDTAILFRSTRDTKVALKVLSAKLLHKNIQGDNEDAIGHDSMEDALTCVDLIFYGLRNPESIAIREANTNC.

Disordered stretches follow at residues 1–199, 274–393, 515–619, and 641–665; these read MFNG…QVQN, QTPA…TSLP, MMQQ…KPVI, and QVKQEIPEVSSTSDATKSDAAPTAR. Low complexity-rich tracts occupy residues 30–64 and 99–131; these read GPSQNAQQQQQQASAPGTSSGGPSQAVSGASSGAS and TQPQQRQQQQSQPQARQMSTQQAANLRKNAAAA. Polar residues predominate over residues 143 to 170; that stretch reads SREQGNAHQPTAGQIPQSSNQPAQQTHN. 2 stretches are compositionally biased toward low complexity: residues 274-297 and 515-526; these read QTPARGRPANAQLAQNAQQRNPQQ and MMQQQAMQMQMQ. Residues 527 to 540 are compositionally biased toward pro residues; that stretch reads NPPPVHQQPPPQQP. Residues 541–555 show a composition bias toward low complexity; it reads PQQQRQKQQRSQPAP. Positions 592-601 are enriched in basic and acidic residues; the sequence is SKIEPVDVKP. Positions 650–664 are enriched in low complexity; sequence SSTSDATKSDAAPTA. Residues 686 to 726 are a coiled coil; the sequence is SAKKFERMKAEAEDKEDMKKKIAALQEALFNIQEERRVEKE. Positions 736-756 are enriched in polar residues; sequence AVPQNQPASSVQIAQVSTSES. Positions 736–1174 are disordered; the sequence is AVPQNQPASS…LRNKKHTTEE (439 aa). Residues 761 to 772 are compositionally biased toward low complexity; it reads TSEAAATETMTS. The span at 783–793 shows a compositional bias: acidic residues; the sequence is TEGEQEEDEDE. Residues 822-833 show a composition bias toward basic and acidic residues; it reads RSDEKREKRHVS. The span at 878 to 905 shows a compositional bias: acidic residues; it reads DNEDDDADSFVVGDDEPIEYEEEDEDDM. The span at 977–992 shows a compositional bias: low complexity; the sequence is TPTASSSMSSSTLSYC. Residues 1018-1031 are compositionally biased toward basic and acidic residues; sequence KTREENRERKRLAQ. Polar residues predominate over residues 1038 to 1054; it reads SETTGVRRTLRSTQDNS. Composition is skewed to basic and acidic residues over residues 1076–1088 and 1139–1174; these read AKSSENRAKEKQK and NHTEMLDKRNKESEEKRRKDRDELERLRNKKHTTEE. A coiled-coil region spans residues 1142 to 1187; sequence EMLDKRNKESEEKRRKDRDELERLRNKKHTTEEEKIKMARLQNALK. In terms of domain architecture, Exonuclease spans 1477–1637; sequence RVYALDCEMV…IFYGLRNPES (161 aa).

It belongs to the REXO1/REXO3 family. As to expression, expressed in the excretory canal, vulval cells, the intestine and in head and tail neurons including ASH, RIC and AIZ neurons.

The protein localises to the nucleus. In terms of biological role, putative RNA exonuclease which protects neurons from the toxic effects of expanded poly-Q disease proteins. It is unknown whether this is via participation in the pathogenic mechanism underlying poly-Q-induced neurodegeneration or if it is by acting as a genetic modifier of the age of onset or progression of neurodegeneration. Regulates gene expression in neurons. The sequence is that of Putative RNA exonuclease pqe-1 from Caenorhabditis elegans.